Consider the following 281-residue polypeptide: Large ribosomal subunit protein mL46 (281 aa).

A mitochondrion-targeting transit peptide spans 1–19 (MKVNLMLKRGLATATATAS). Basic and acidic residues predominate over residues 106 to 118 (RERSTKQEVKLSD). A disordered region spans residues 106–141 (RERSTKQEVKLSDDSTVAFSNNQKEQSKDDVNRPVI). Polar residues predominate over residues 119–129 (DSTVAFSNNQK).

It belongs to the mitochondrion-specific ribosomal protein mL46 family. In terms of assembly, component of the mitochondrial large ribosomal subunit (mt-LSU). Mature yeast 74S mitochondrial ribosomes consist of a small (37S) and a large (54S) subunit. The 37S small subunit contains a 15S ribosomal RNA (15S mt-rRNA) and 34 different proteins. The 54S large subunit contains a 21S rRNA (21S mt-rRNA) and 46 different proteins.

The protein localises to the mitochondrion. In terms of biological role, component of the mitochondrial ribosome (mitoribosome), a dedicated translation machinery responsible for the synthesis of mitochondrial genome-encoded proteins, including at least some of the essential transmembrane subunits of the mitochondrial respiratory chain. The mitoribosomes are attached to the mitochondrial inner membrane and translation products are cotranslationally integrated into the membrane. The protein is Large ribosomal subunit protein mL46 (MRPL17) of Saccharomyces cerevisiae (strain ATCC 204508 / S288c) (Baker's yeast).